An 83-amino-acid polypeptide reads, in one-letter code: Conotoxin VnMKLT1-022 (83 aa).

The first 22 residues, 1-22, serve as a signal peptide directing secretion; it reads MKLMCMMIVAVLFLTAWTFVTA. Positions 23 to 55 are excised as a propeptide; the sequence is DDSINGPENRRIWEKLLSKTRDEMKNPEASKLN. Intrachain disulfides connect cysteine 59–cysteine 74, cysteine 66–cysteine 78, and cysteine 73–cysteine 82.

It belongs to the conotoxin O1 superfamily. Expressed by the venom duct.

It localises to the secreted. The chain is Conotoxin VnMKLT1-022 from Conus ventricosus (Mediterranean cone).